We begin with the raw amino-acid sequence, 230 residues long: Proteasome subunit beta 2 (230 aa).

Basic and acidic residues predominate over residues methionine 1–aspartate 10. The disordered stretch occupies residues methionine 1 to glutamate 29. Positions methionine 1–glycine 35 are cleaved as a propeptide — removed in mature form; by autocatalysis. The active-site Nucleophile is threonine 36.

It belongs to the peptidase T1B family. In terms of assembly, the 20S proteasome core is composed of 14 alpha and 14 beta subunits that assemble into four stacked heptameric rings, resulting in a barrel-shaped structure. The two inner rings, each composed of seven catalytic beta subunits, are sandwiched by two outer rings, each composed of seven alpha subunits. The catalytic chamber with the active sites is on the inside of the barrel. Has a gated structure, the ends of the cylinder being occluded by the N-termini of the alpha-subunits. Is capped at one or both ends by the proteasome regulatory ATPase, PAN.

It is found in the cytoplasm. The catalysed reaction is Cleavage of peptide bonds with very broad specificity.. With respect to regulation, the formation of the proteasomal ATPase PAN-20S proteasome complex, via the docking of the C-termini of PAN into the intersubunit pockets in the alpha-rings, triggers opening of the gate for substrate entry. Interconversion between the open-gate and close-gate conformations leads to a dynamic regulation of the 20S proteasome proteolysis activity. Functionally, component of the proteasome core, a large protease complex with broad specificity involved in protein degradation. In Haloarcula marismortui (strain ATCC 43049 / DSM 3752 / JCM 8966 / VKM B-1809) (Halobacterium marismortui), this protein is Proteasome subunit beta 2.